The following is a 208-amino-acid chain: Ubiquitin-conjugating enzyme E2 S (208 aa).

The UBC core domain maps to 14-160 (QTIRQVMREL…ARMMTEIHAQ (147 aa)). Cys98 serves as the catalytic Glycyl thioester intermediate. Residues 159–208 (AQPAKCASTTSDAKDDDGPSTKKHAGLDKKLQDKKKEKLLKEKKRMLKRL) form a disordered region. Positions 170–198 (DAKDDDGPSTKKHAGLDKKLQDKKKEKLL) are enriched in basic and acidic residues. The span at 199–208 (KEKKRMLKRL) shows a compositional bias: basic residues.

This sequence belongs to the ubiquitin-conjugating enzyme family.

The enzyme catalyses S-ubiquitinyl-[E1 ubiquitin-activating enzyme]-L-cysteine + [E2 ubiquitin-conjugating enzyme]-L-cysteine = [E1 ubiquitin-activating enzyme]-L-cysteine + S-ubiquitinyl-[E2 ubiquitin-conjugating enzyme]-L-cysteine.. It participates in protein modification; protein ubiquitination. Its function is as follows. Catalyzes the covalent attachment of ubiquitin to other proteins. Acts as an essential factor of the anaphase promoting complex/cyclosome (APC/C), a cell cycle-regulated ubiquitin ligase that controls progression through mitosis. Acts by specifically elongating polyubiquitin chains initiated by the E2 enzyme vih/UbcH10 on APC/C substrates, enhancing the degradation of APC/C substrates by the proteasome and promoting mitotic exit. This is Ubiquitin-conjugating enzyme E2 S from Drosophila willistoni (Fruit fly).